We begin with the raw amino-acid sequence, 240 residues long: Glutathione S-transferase theta-1 (240 aa).

The 81-residue stretch at 2-82 (GLELYLDLLS…YLARKYKVPD (81 aa)) folds into the GST N-terminal domain. Glutathione-binding positions include H40, 53–54 (KV), and 66–67 (ES). One can recognise a GST C-terminal domain in the interval 88-226 (DLQACARVDE…AKDSQPADPT (139 aa)).

The protein belongs to the GST superfamily. Theta family. In terms of assembly, homodimer.

The protein localises to the cytoplasm. The catalysed reaction is RX + glutathione = an S-substituted glutathione + a halide anion + H(+). Its function is as follows. Conjugation of reduced glutathione to a wide number of exogenous and endogenous hydrophobic electrophiles. Also binds steroids, bilirubin, carcinogens and numerous organic anions. Has dichloromethane dehalogenase activity. This chain is Glutathione S-transferase theta-1 (GSTT1), found in Bos taurus (Bovine).